The primary structure comprises 647 residues: Threonine--tRNA ligase (647 aa).

A TGS domain is found at 1 to 61; that stretch reads MIKITFPDGA…EEDGSIEIVT (61 aa). A catalytic region spans residues 240–538; it reads DHRKLGKELD…LIETYKGAFP (299 aa). Positions 334, 385, and 515 each coordinate Zn(2+).

This sequence belongs to the class-II aminoacyl-tRNA synthetase family. In terms of assembly, homodimer. It depends on Zn(2+) as a cofactor.

The protein resides in the cytoplasm. The catalysed reaction is tRNA(Thr) + L-threonine + ATP = L-threonyl-tRNA(Thr) + AMP + diphosphate + H(+). Its function is as follows. Catalyzes the attachment of threonine to tRNA(Thr) in a two-step reaction: L-threonine is first activated by ATP to form Thr-AMP and then transferred to the acceptor end of tRNA(Thr). Also edits incorrectly charged L-seryl-tRNA(Thr). The polypeptide is Threonine--tRNA ligase (Streptococcus pyogenes serotype M18 (strain MGAS8232)).